The following is a 375-amino-acid chain: Aminomethyltransferase (375 aa).

Belongs to the GcvT family. The glycine cleavage system is composed of four proteins: P, T, L and H.

The enzyme catalyses N(6)-[(R)-S(8)-aminomethyldihydrolipoyl]-L-lysyl-[protein] + (6S)-5,6,7,8-tetrahydrofolate = N(6)-[(R)-dihydrolipoyl]-L-lysyl-[protein] + (6R)-5,10-methylene-5,6,7,8-tetrahydrofolate + NH4(+). Functionally, the glycine cleavage system catalyzes the degradation of glycine. The chain is Aminomethyltransferase from Ralstonia pickettii (strain 12J).